The primary structure comprises 321 residues: Mas-related G-protein coupled receptor member B4 (321 aa).

Residues Met-1–Asn-33 lie on the Extracellular side of the membrane. 2 N-linked (GlcNAc...) asparagine glycosylation sites follow: Asn-11 and Asn-16. Residues Phe-34 to Leu-54 traverse the membrane as a helical segment. Residues Ala-55–Ala-62 lie on the Cytoplasmic side of the membrane. Residues Phe-63–Val-83 traverse the membrane as a helical segment. Topologically, residues His-84–Phe-97 are extracellular. A glycan (N-linked (GlcNAc...) asparagine) is linked at Asn-94. The helical transmembrane segment at Tyr-98 to Ile-118 threads the bilayer. Topologically, residues Ser-119–Ala-146 are cytoplasmic. The helical transmembrane segment at Leu-147–Phe-167 threads the bilayer. Topologically, residues Ser-168 to Tyr-172 are extracellular. A helical transmembrane segment spans residues Tyr-173 to Leu-193. Over Ser-194–Arg-215 the chain is Cytoplasmic. Residues Phe-216–Ile-236 traverse the membrane as a helical segment. Topologically, residues Cys-237 to Glu-257 are extracellular. A helical transmembrane segment spans residues Ile-258–Gly-278. At Ser-279–Val-321 the chain is on the cytoplasmic side. Positions Gln-299–Val-321 are disordered.

Belongs to the G-protein coupled receptor 1 family. Mas subfamily.

It localises to the membrane. Orphan receptor. Probably involved in the function of nociceptive neurons. May regulate nociceptor function and/or development, including the sensation or modulation of pain. The chain is Mas-related G-protein coupled receptor member B4 (Mrgprb4) from Mus musculus (Mouse).